The following is a 510-amino-acid chain: NAD(P)H-quinone oxidoreductase subunit 2 B, chloroplastic (510 aa).

A run of 13 helical transmembrane segments spans residues Leu24–Leu44, Ile57–Phe77, Ile99–Ile119, Met124–Cys144, Leu149–Tyr169, Tyr183–Gly203, Pro227–Ala247, Trp295–Ile315, Met323–Asp343, Tyr354–Leu374, Ala392–Ala412, Leu418–Leu438, and Leu482–Ile502.

The protein belongs to the complex I subunit 2 family. As to quaternary structure, NDH is composed of at least 16 different subunits, 5 of which are encoded in the nucleus.

It is found in the plastid. The protein localises to the chloroplast thylakoid membrane. It carries out the reaction a plastoquinone + NADH + (n+1) H(+)(in) = a plastoquinol + NAD(+) + n H(+)(out). The enzyme catalyses a plastoquinone + NADPH + (n+1) H(+)(in) = a plastoquinol + NADP(+) + n H(+)(out). NDH shuttles electrons from NAD(P)H:plastoquinone, via FMN and iron-sulfur (Fe-S) centers, to quinones in the photosynthetic chain and possibly in a chloroplast respiratory chain. The immediate electron acceptor for the enzyme in this species is believed to be plastoquinone. Couples the redox reaction to proton translocation, and thus conserves the redox energy in a proton gradient. The chain is NAD(P)H-quinone oxidoreductase subunit 2 B, chloroplastic from Morus indica (Mulberry).